The following is a 168-amino-acid chain: Transcriptional repressor NrdR (168 aa).

A zinc finger spans residues 3-34 (CPFCQDAENKVIDSRESHEGSVIRRRRECLTC). The 91-residue stretch at 49–139 (PLIVKKDGRR…VYRSFRDIAE (91 aa)) folds into the ATP-cone domain.

This sequence belongs to the NrdR family. Requires Zn(2+) as cofactor.

Its function is as follows. Negatively regulates transcription of bacterial ribonucleotide reductase nrd genes and operons by binding to NrdR-boxes. This chain is Transcriptional repressor NrdR, found in Myxococcus xanthus (strain DK1622).